The primary structure comprises 396 residues: Transcription factor E2FC (396 aa).

Residues 34–48 (PRYSSLTPSSTNRPF) are compositionally biased toward polar residues. Positions 34 to 57 (PRYSSLTPSSTNRPFSVSQSLPNS) are disordered. A DNA-binding region spans residues 155-220 (RYDSSLGLLT…TTKNHIRWKG (66 aa)). The stretch at 226-268 (QKDLGDQISRLKSEVESMQSEESRLDDLIRERQEALRSLEEDD) forms a coiled coil. A leucine-zipper region spans residues 236-264 (LKSEVESMQSEESRLDDLIRERQEALRSL). A retinoblastoma protein binding region spans residues 376–391 (DYWFESDAEVSLTDLW).

This sequence belongs to the E2F/DP family. Heterodimer with DP proteins. Interacts preferentially with DPB, but also with DPA. No interaction with DPB when phosphorylated. Interacts with SKP2A, CDKA-1 and maize retinoblastoma-related protein RBR1. Component of a DREAM-like complex which modulates a variety of developmentally regulated genes and of the mitotic genes in proliferating and differentiated cells. Interacts with MYB3R3 at later stages of leaves development. Phosphorylated by cyclin-dependent kinase. Phosphorylation is necessary to target E2FC for proteolysis. In terms of tissue distribution, expressed in meristematic areas, vascular tissues, apical part of the roots, cotyledons, upper region of the hypocotyls, trichomes, young flower buds and pollen grains.

It localises to the cytoplasm. In terms of biological role, involved in transcriptional repression. May act by repressing E2F-regulated genes in mature differentiated cells, but is not an antagonist of E2FA. Restricts cell division and is involved in the coordination between cell proliferation and endoreduplication during development. May play a role during the transition from skotomorphogenesis to photomorphogenesis. Regulated by phosphorylation-dependent proteolysis via the protein-ubiquitin ligase SCF(SKP2A) complex. This is Transcription factor E2FC (E2FC) from Arabidopsis thaliana (Mouse-ear cress).